The chain runs to 148 residues: UPF0756 membrane protein YeaL (148 aa).

4 helical membrane passes run 14-34 (ALGF…LIIV), 51-71 (LSIG…SGTL), 86-106 (LVAI…VTLM), and 112-132 (LVAG…GVPV).

It belongs to the UPF0756 family.

It localises to the cell membrane. This chain is UPF0756 membrane protein YeaL, found in Escherichia coli O157:H7.